The sequence spans 560 residues: Arginine--tRNA ligase (560 aa).

A 'HIGH' region motif is present at residues 122–132; that stretch reads ANPNGPLHVGH.

The protein belongs to the class-I aminoacyl-tRNA synthetase family.

Its subcellular location is the cytoplasm. It catalyses the reaction tRNA(Arg) + L-arginine + ATP = L-arginyl-tRNA(Arg) + AMP + diphosphate. The protein is Arginine--tRNA ligase of Methanosphaera stadtmanae (strain ATCC 43021 / DSM 3091 / JCM 11832 / MCB-3).